Here is a 301-residue protein sequence, read N- to C-terminus: (R)-2-haloacid dehalogenase (301 aa).

This sequence belongs to the HAD-like hydrolase superfamily. S-2-haloalkanoic acid dehalogenase family. In terms of assembly, homotetramer.

The catalysed reaction is an (R)-2-haloacid + H2O = a (2S)-2-hydroxycarboxylate + a halide anion + H(+). Catalyzes the hydrolytic dehalogenation of small (R)-2-haloalkanoic acids to yield the corresponding (S)-2-hydroxyalkanoic acids. Acts on acids of short chain lengths, C(2) to C(4), with inversion of configuration at C-2. This is (R)-2-haloacid dehalogenase (hadD) from Pseudomonas putida (Arthrobacter siderocapsulatus).